The primary structure comprises 573 residues: Cytosolic 5'-nucleotidase 1B (573 aa).

The segment covering 1-11 (MSQTSLKHKKK) has biased composition (basic residues). Disordered stretches follow at residues 1-200 (MSQT…PPTE) and 218-238 (EPEY…EEDE). Basic and acidic residues predominate over residues 12 to 35 (NEPGMRYSKESLDAEKRKDSDKTG). Polar residues predominate over residues 60 to 73 (NQWSRTSRSPSTGA). Over residues 93-105 (SSTTSRTSSASPS) the composition is skewed to low complexity. The segment covering 115-136 (TSEKSSIQQTPQNRPITQLESQ) has biased composition (polar residues). Basic and acidic residues-rich tracts occupy residues 161–174 (WAHR…DLQL) and 182–194 (DSRE…REYP). The active-site Nucleophile is the D428.

The protein belongs to the 5'-nucleotidase type 3 family. Requires Mg(2+) as cofactor. As to expression, expressed at highest levels in testis. Also expressed in brain, skeletal muscle, kidney and heart.

The protein localises to the cytoplasm. It carries out the reaction a ribonucleoside 5'-phosphate + H2O = a ribonucleoside + phosphate. It catalyses the reaction AMP + H2O = adenosine + phosphate. Activated by ADP. Functionally, catalyzes the hydrolysis of nucleotide monophosphates, releasing inorganic phosphate and the corresponding nucleoside, AMP is the major substrate. The polypeptide is Cytosolic 5'-nucleotidase 1B (Nt5c1b) (Mus musculus (Mouse)).